The primary structure comprises 61 residues: Protein A40 homolog (61 aa).

Topologically, residues 1–11 are cytoplasmic; the sequence is MTMNKPKTNYA. Residues 12-32 traverse the membrane as a helical; Signal-anchor for type II membrane protein segment; the sequence is GYACCVICGLIVGIIFTATLL. The Extracellular segment spans residues 33 to 61; that stretch reads KAVERKLIHTPLIDKTIKDAYIREDCPTD.

The protein belongs to the poxviridae A40 protein family.

Its subcellular location is the host membrane. The sequence is that of Protein A40 homolog (A45R) from Homo sapiens (Human).